The primary structure comprises 835 residues: Protein translocase subunit SecA (835 aa).

Residues Gln85, Gly103–Thr107, and Asp492 each bind ATP. Cys819, Cys821, Cys830, and Cys831 together coordinate Zn(2+).

This sequence belongs to the SecA family. Monomer and homodimer. Part of the essential Sec protein translocation apparatus which comprises SecA, SecYEG and auxiliary proteins SecDF. Other proteins may also be involved. Requires Zn(2+) as cofactor.

The protein localises to the cell membrane. The protein resides in the cytoplasm. It carries out the reaction ATP + H2O + cellular proteinSide 1 = ADP + phosphate + cellular proteinSide 2.. Its function is as follows. Part of the Sec protein translocase complex. Interacts with the SecYEG preprotein conducting channel. Has a central role in coupling the hydrolysis of ATP to the transfer of proteins into and across the cell membrane, serving as an ATP-driven molecular motor driving the stepwise translocation of polypeptide chains across the membrane. This is Protein translocase subunit SecA from Clostridium botulinum (strain Kyoto / Type A2).